Here is a 388-residue protein sequence, read N- to C-terminus: Chorismate synthase (388 aa).

NADP(+)-binding residues include Arg-39 and Arg-45. Residues 130–132 (RSS), 251–252 (NA), Gly-296, 311–315 (KPIPT), and Arg-337 contribute to the FMN site.

This sequence belongs to the chorismate synthase family. In terms of assembly, homotetramer. It depends on FMNH2 as a cofactor.

It carries out the reaction 5-O-(1-carboxyvinyl)-3-phosphoshikimate = chorismate + phosphate. It functions in the pathway metabolic intermediate biosynthesis; chorismate biosynthesis; chorismate from D-erythrose 4-phosphate and phosphoenolpyruvate: step 7/7. Catalyzes the anti-1,4-elimination of the C-3 phosphate and the C-6 proR hydrogen from 5-enolpyruvylshikimate-3-phosphate (EPSP) to yield chorismate, which is the branch point compound that serves as the starting substrate for the three terminal pathways of aromatic amino acid biosynthesis. This reaction introduces a second double bond into the aromatic ring system. The sequence is that of Chorismate synthase from Geobacillus sp. (strain WCH70).